Here is a 167-residue protein sequence, read N- to C-terminus: Lipoprotein signal peptidase (167 aa).

The next 2 helical transmembrane spans lie at 67-87 and 91-111; these read WILV…LWRA and LVAL…IDRI. Catalysis depends on residues aspartate 118 and aspartate 136. The chain crosses the membrane as a helical span at residues 127–147; sequence FSWYVFNLADAAIVAGVALLI.

Belongs to the peptidase A8 family.

Its subcellular location is the cell inner membrane. The enzyme catalyses Release of signal peptides from bacterial membrane prolipoproteins. Hydrolyzes -Xaa-Yaa-Zaa-|-(S,diacylglyceryl)Cys-, in which Xaa is hydrophobic (preferably Leu), and Yaa (Ala or Ser) and Zaa (Gly or Ala) have small, neutral side chains.. Its pathway is protein modification; lipoprotein biosynthesis (signal peptide cleavage). This protein specifically catalyzes the removal of signal peptides from prolipoproteins. This Beijerinckia indica subsp. indica (strain ATCC 9039 / DSM 1715 / NCIMB 8712) protein is Lipoprotein signal peptidase.